Reading from the N-terminus, the 279-residue chain is Diaminopimelate epimerase (279 aa).

The substrate site is built by Asn-13 and Asn-66. The active-site Proton donor is Cys-75. Substrate-binding positions include 76 to 77 (GN), Asn-162, Asn-195, and 213 to 214 (ER). Cys-222 serves as the catalytic Proton acceptor. Position 223–224 (223–224 (GT)) interacts with substrate.

The protein belongs to the diaminopimelate epimerase family. As to quaternary structure, homodimer.

The protein resides in the cytoplasm. The enzyme catalyses (2S,6S)-2,6-diaminopimelate = meso-2,6-diaminopimelate. The protein operates within amino-acid biosynthesis; L-lysine biosynthesis via DAP pathway; DL-2,6-diaminopimelate from LL-2,6-diaminopimelate: step 1/1. Catalyzes the stereoinversion of LL-2,6-diaminopimelate (L,L-DAP) to meso-diaminopimelate (meso-DAP), a precursor of L-lysine and an essential component of the bacterial peptidoglycan. The protein is Diaminopimelate epimerase of Synechocystis sp. (strain ATCC 27184 / PCC 6803 / Kazusa).